Here is a 447-residue protein sequence, read N- to C-terminus: N-succinylarginine dihydrolase (447 aa).

Residues 19 to 28 (AGLSFGNEAS), Asn-110, and 137 to 138 (HR) contribute to the substrate site. Glu-174 is an active-site residue. Substrate is bound at residue Arg-212. His-248 is an active-site residue. Substrate is bound by residues Asp-250 and Asn-359. The active-site Nucleophile is Cys-365.

It belongs to the succinylarginine dihydrolase family. As to quaternary structure, homodimer.

It carries out the reaction N(2)-succinyl-L-arginine + 2 H2O + 2 H(+) = N(2)-succinyl-L-ornithine + 2 NH4(+) + CO2. Its pathway is amino-acid degradation; L-arginine degradation via AST pathway; L-glutamate and succinate from L-arginine: step 2/5. Its function is as follows. Catalyzes the hydrolysis of N(2)-succinylarginine into N(2)-succinylornithine, ammonia and CO(2). The polypeptide is N-succinylarginine dihydrolase (Escherichia fergusonii (strain ATCC 35469 / DSM 13698 / CCUG 18766 / IAM 14443 / JCM 21226 / LMG 7866 / NBRC 102419 / NCTC 12128 / CDC 0568-73)).